The sequence spans 377 residues: 23S rRNA (uracil(747)-C(5))-methyltransferase RlmC (377 aa).

[4Fe-4S] cluster-binding residues include C3, C11, C14, and C87. Residues Q212, F241, E262, and N307 each contribute to the S-adenosyl-L-methionine site. C334 functions as the Nucleophile in the catalytic mechanism.

This sequence belongs to the class I-like SAM-binding methyltransferase superfamily. RNA M5U methyltransferase family. RlmC subfamily.

The enzyme catalyses uridine(747) in 23S rRNA + S-adenosyl-L-methionine = 5-methyluridine(747) in 23S rRNA + S-adenosyl-L-homocysteine + H(+). Catalyzes the formation of 5-methyl-uridine at position 747 (m5U747) in 23S rRNA. This chain is 23S rRNA (uracil(747)-C(5))-methyltransferase RlmC, found in Photorhabdus laumondii subsp. laumondii (strain DSM 15139 / CIP 105565 / TT01) (Photorhabdus luminescens subsp. laumondii).